Reading from the N-terminus, the 311-residue chain is Methionyl-tRNA formyltransferase (311 aa).

110–113 contributes to the (6S)-5,6,7,8-tetrahydrofolate binding site; the sequence is SLLP.

The protein belongs to the Fmt family.

The catalysed reaction is L-methionyl-tRNA(fMet) + (6R)-10-formyltetrahydrofolate = N-formyl-L-methionyl-tRNA(fMet) + (6S)-5,6,7,8-tetrahydrofolate + H(+). Functionally, attaches a formyl group to the free amino group of methionyl-tRNA(fMet). The formyl group appears to play a dual role in the initiator identity of N-formylmethionyl-tRNA by promoting its recognition by IF2 and preventing the misappropriation of this tRNA by the elongation apparatus. The protein is Methionyl-tRNA formyltransferase of Streptococcus equi subsp. zooepidemicus (strain H70).